Reading from the N-terminus, the 789-residue chain is Trimethylamine-oxide aldolase (789 aa).

This sequence in the C-terminal section; belongs to the GcvT family.

The catalysed reaction is trimethylamine N-oxide + H(+) = dimethylamine + formaldehyde. In terms of biological role, catalyzes the conversion of trimethylamine N-oxide (TMAO) to dimethylamine (DMA) and formaldehyde. The protein is Trimethylamine-oxide aldolase of Ruegeria pomeroyi (strain ATCC 700808 / DSM 15171 / DSS-3) (Silicibacter pomeroyi).